The primary structure comprises 217 residues: Small ribosomal subunit protein uS3c (217 aa).

Residues 46–117 (VQKHIKNSSN…RLRMTLIEIA (72 aa)) enclose the KH type-2 domain.

It belongs to the universal ribosomal protein uS3 family. In terms of assembly, part of the 30S ribosomal subunit.

The protein resides in the plastid. The protein localises to the chloroplast. The sequence is that of Small ribosomal subunit protein uS3c (rps3) from Marchantia polymorpha (Common liverwort).